We begin with the raw amino-acid sequence, 149 residues long: Calmodulin-3 (149 aa).

At A2 the chain carries N-acetylalanine. 4 consecutive EF-hand domains span residues 8–43 (DQIA…LGQN), 44–79 (PTEA…KMKD), 81–116 (DSEE…LGEK), and 117–149 (LTDE…MMAK). Residues D21, D23, D25, C27, E32, D57, D59, N61, T63, E68, D94, D96, N98, and E105 each contribute to the Ca(2+) site. The residue at position 116 (K116) is an N6,N6,N6-trimethyllysine. 5 residues coordinate Ca(2+): D130, D132, D134, Q136, and E141.

The protein belongs to the calmodulin family.

Calmodulin mediates the control of a large number of enzymes, ion channels and other proteins by Ca(2+). Among the enzymes to be stimulated by the calmodulin-Ca(2+) complex are a number of protein kinases and phosphatases. In Oryza sativa subsp. indica (Rice), this protein is Calmodulin-3 (CAM3).